The sequence spans 205 residues: Pyridoxal 5'-phosphate synthase subunit PdxT (205 aa).

An L-glutamine-binding site is contributed by 53 to 55; that stretch reads GES. Catalysis depends on Cys85, which acts as the Nucleophile. L-glutamine-binding positions include Arg112 and 140-141; that span reads IR. Catalysis depends on charge relay system residues His176 and Glu178.

The protein belongs to the glutaminase PdxT/SNO family. In terms of assembly, in the presence of PdxS, forms a dodecamer of heterodimers. Only shows activity in the heterodimer.

The catalysed reaction is aldehydo-D-ribose 5-phosphate + D-glyceraldehyde 3-phosphate + L-glutamine = pyridoxal 5'-phosphate + L-glutamate + phosphate + 3 H2O + H(+). It catalyses the reaction L-glutamine + H2O = L-glutamate + NH4(+). It participates in cofactor biosynthesis; pyridoxal 5'-phosphate biosynthesis. Its function is as follows. Catalyzes the hydrolysis of glutamine to glutamate and ammonia as part of the biosynthesis of pyridoxal 5'-phosphate. The resulting ammonia molecule is channeled to the active site of PdxS. The protein is Pyridoxal 5'-phosphate synthase subunit PdxT of Haloquadratum walsbyi (strain DSM 16790 / HBSQ001).